The following is a 435-amino-acid chain: MIKEKLTIIGAGLAGCEAAWQAAGRGVAVTLHEMKPEKYSPAHHLPGLAELVCSNSLRGESLENAVGLLKEELRRLGSLFMEAALATRVPAGGALAVDRGLFSAFITDKIENHPLIEVVHGEVAEIPADGTVIVASGPLTSDALAASIGKYTGDYLYFYDAIAPIVTSDSIDLSKAFRASRYGKGDGDDYLNCPLDEAEYKAFIAALLAAEKVAAKEFEKVVHFEGCMPIEEMAERGLDTLRFGPMKPVGLIDPRTGIEPHAVVQLRQENREGTLFNLVGFQTKLTYPEQQRIFRTIPGLGKAEFVRLGSMHRNTFINAPQLLLSTFQLKREPRILFAGQITGVEGYVESAASGFLAGLNGARLAKGEALIVPPSVTALGALVNHITSAPAKHFQPMNINYGLFPDLAGRVKKKEKRAKLAERALTELDGWMNTL.

10-15 contributes to the FAD binding site; it reads GAGLAG.

The protein belongs to the MnmG family. TrmFO subfamily. FAD is required as a cofactor.

Its subcellular location is the cytoplasm. The enzyme catalyses uridine(54) in tRNA + (6R)-5,10-methylene-5,6,7,8-tetrahydrofolate + NADH + H(+) = 5-methyluridine(54) in tRNA + (6S)-5,6,7,8-tetrahydrofolate + NAD(+). The catalysed reaction is uridine(54) in tRNA + (6R)-5,10-methylene-5,6,7,8-tetrahydrofolate + NADPH + H(+) = 5-methyluridine(54) in tRNA + (6S)-5,6,7,8-tetrahydrofolate + NADP(+). In terms of biological role, catalyzes the folate-dependent formation of 5-methyl-uridine at position 54 (M-5-U54) in all tRNAs. This is Methylenetetrahydrofolate--tRNA-(uracil-5-)-methyltransferase TrmFO from Geotalea uraniireducens (strain Rf4) (Geobacter uraniireducens).